We begin with the raw amino-acid sequence, 498 residues long: ATP synthase subunit beta, chloroplastic (498 aa).

172–179 contacts ATP; the sequence is GGAGVGKT.

This sequence belongs to the ATPase alpha/beta chains family. As to quaternary structure, F-type ATPases have 2 components, CF(1) - the catalytic core - and CF(0) - the membrane proton channel. CF(1) has five subunits: alpha(3), beta(3), gamma(1), delta(1), epsilon(1). CF(0) has four main subunits: a(1), b(1), b'(1) and c(9-12).

It is found in the plastid. It localises to the chloroplast thylakoid membrane. It carries out the reaction ATP + H2O + 4 H(+)(in) = ADP + phosphate + 5 H(+)(out). In terms of biological role, produces ATP from ADP in the presence of a proton gradient across the membrane. The catalytic sites are hosted primarily by the beta subunits. This chain is ATP synthase subunit beta, chloroplastic, found in Hyphaene coriacea (Ilala palm).